A 323-amino-acid chain; its full sequence is tRNA dimethylallyltransferase (323 aa).

An ATP-binding site is contributed by Gly12 to Thr19. Residue Thr14 to Thr19 coordinates substrate. 2 interaction with substrate tRNA regions span residues Asp37–Leu40 and Gln161–Arg165.

The protein belongs to the IPP transferase family. In terms of assembly, monomer. Requires Mg(2+) as cofactor.

It catalyses the reaction adenosine(37) in tRNA + dimethylallyl diphosphate = N(6)-dimethylallyladenosine(37) in tRNA + diphosphate. Catalyzes the transfer of a dimethylallyl group onto the adenine at position 37 in tRNAs that read codons beginning with uridine, leading to the formation of N6-(dimethylallyl)adenosine (i(6)A). In Pseudomonas putida (strain GB-1), this protein is tRNA dimethylallyltransferase.